Here is a 1163-residue protein sequence, read N- to C-terminus: GTPase-activating protein (1163 aa).

C2 domains are found at residues 26–148 and 261–419; these read PSSN…DHWF and TTST…SAWY. The region spanning 520 to 737 is the Ras-GAP domain; the sequence is ERIAPIIKAL…DAVKHFLEVI (218 aa). Residues 762–860 form the PH domain; the sequence is LKEGLMTKYP…WFDLLHKICL (99 aa). The Btk-type zinc-finger motif lies at 862–898; it reads NSIRMQYFHPSAFVSGFYSCCGRSDENSPGCKKVLDK. The Zn(2+) site is built by His870, Cys881, Cys882, and Cys892. Disordered regions lie at residues 1026-1051 and 1091-1163; these read LNQQ…LQQF and PFHQ…PPIY. Low complexity predominate over residues 1091–1157; sequence PFHQQQQQHH…APPSTTSSSQ (67 aa).

As to quaternary structure, interacts with sty. In terms of tissue distribution, in third instar larvae eye imaginal disk, expressed in cells posterior to the morphogenetic furrow, in all photoreceptor and cone cell precursors as well as in still uncommitted cells.

Functionally, inhibitory regulator of the Ras-cyclic AMP pathway. May function as a negative regulator of Ras85D/Ras1 in the sev signaling pathway. Acts cell autonomously in cone cell precursors as a negative regulator of R7 photoreceptor cell determination. This Drosophila melanogaster (Fruit fly) protein is GTPase-activating protein (RasGAP1).